We begin with the raw amino-acid sequence, 1059 residues long: Endo-1,4-beta-xylanase A (1059 aa).

Positions 1–30 (MQVRKRRGLLDVSTAVLVGILAGFLGVVLA) are cleaved as a signal peptide. The segment at 47 to 199 (SSLETVLALS…LDKVQVLAPK (153 aa)) is A-1. The tract at residues 200 to 354 (ESGPKVIYET…DDVKIVDTTS (155 aa)) is A-2. The 329-residue stretch at 364 to 692 (EKEIPALKEV…KLAYWAIVAP (329 aa)) folds into the GH10 domain. The active-site Proton donor is Glu502. The Nucleophile role is filled by Glu608. 2 consecutive CBM-cenC domains span residues 700-870 (KESR…LEGI) and 871-1059 (MVAT…RLIK).

The protein belongs to the glycosyl hydrolase 10 (cellulase F) family.

It catalyses the reaction Endohydrolysis of (1-&gt;4)-beta-D-xylosidic linkages in xylans.. In Thermotoga maritima (strain ATCC 43589 / DSM 3109 / JCM 10099 / NBRC 100826 / MSB8), this protein is Endo-1,4-beta-xylanase A (xynA).